The chain runs to 203 residues: Probable GTP-binding protein EngB (203 aa).

In terms of domain architecture, EngB-type G spans 24-199 (DGSEVAFAGR…HTVIETWLGL (176 aa)). Residues 32 to 39 (GRSNAGKS), 59 to 63 (GRTQQ), 77 to 80 (DLPG), 144 to 147 (TKAD), and 178 to 180 (FSS) each bind GTP. The Mg(2+) site is built by S39 and T61.

The protein belongs to the TRAFAC class TrmE-Era-EngA-EngB-Septin-like GTPase superfamily. EngB GTPase family. Requires Mg(2+) as cofactor.

Necessary for normal cell division and for the maintenance of normal septation. This Xylella fastidiosa (strain 9a5c) protein is Probable GTP-binding protein EngB.